Consider the following 338-residue polypeptide: 5-dehydro-2-deoxygluconokinase (338 aa).

It belongs to the carbohydrate kinase PfkB family.

It carries out the reaction 5-dehydro-2-deoxy-D-gluconate + ATP = 6-phospho-5-dehydro-2-deoxy-D-gluconate + ADP + H(+). Its pathway is polyol metabolism; myo-inositol degradation into acetyl-CoA; acetyl-CoA from myo-inositol: step 5/7. In terms of biological role, catalyzes the phosphorylation of 5-dehydro-2-deoxy-D-gluconate (2-deoxy-5-keto-D-gluconate or DKG) to 6-phospho-5-dehydro-2-deoxy-D-gluconate (DKGP). This is 5-dehydro-2-deoxygluconokinase from Clostridium perfringens (strain ATCC 13124 / DSM 756 / JCM 1290 / NCIMB 6125 / NCTC 8237 / Type A).